Consider the following 95-residue polypeptide: MALERSDVEKIAHLARLGLSEADLPRTTETLNNILGLIDQMQAVDTSGVEPLAHPLEATQRLRPDAVTETDHRDAYQTIAPAVEEGLYLVPKVIE.

The protein belongs to the GatC family. As to quaternary structure, heterotrimer of A, B and C subunits.

It carries out the reaction L-glutamyl-tRNA(Gln) + L-glutamine + ATP + H2O = L-glutaminyl-tRNA(Gln) + L-glutamate + ADP + phosphate + H(+). The enzyme catalyses L-aspartyl-tRNA(Asn) + L-glutamine + ATP + H2O = L-asparaginyl-tRNA(Asn) + L-glutamate + ADP + phosphate + 2 H(+). Its function is as follows. Allows the formation of correctly charged Asn-tRNA(Asn) or Gln-tRNA(Gln) through the transamidation of misacylated Asp-tRNA(Asn) or Glu-tRNA(Gln) in organisms which lack either or both of asparaginyl-tRNA or glutaminyl-tRNA synthetases. The reaction takes place in the presence of glutamine and ATP through an activated phospho-Asp-tRNA(Asn) or phospho-Glu-tRNA(Gln). This is Aspartyl/glutamyl-tRNA(Asn/Gln) amidotransferase subunit C from Pseudomonas paraeruginosa (strain DSM 24068 / PA7) (Pseudomonas aeruginosa (strain PA7)).